The sequence spans 245 residues: Ribosomal RNA small subunit methyltransferase G (245 aa).

S-adenosyl-L-methionine-binding positions include G90, L95, 140 to 141 (AE), and R158.

It belongs to the methyltransferase superfamily. RNA methyltransferase RsmG family.

Its subcellular location is the cytoplasm. Specifically methylates the N7 position of guanine in position 518 of 16S rRNA. In Mycobacterium leprae (strain TN), this protein is Ribosomal RNA small subunit methyltransferase G.